A 164-amino-acid chain; its full sequence is UPF0304 protein YfbU (164 aa).

It belongs to the UPF0304 family.

This is UPF0304 protein YfbU from Shigella flexneri.